The chain runs to 427 residues: Trigger factor (427 aa).

The region spanning 163–248 (GDTVVIDFVG…IHEVKAKEVP (86 aa)) is the PPIase FKBP-type domain.

The protein belongs to the FKBP-type PPIase family. Tig subfamily.

The protein localises to the cytoplasm. It carries out the reaction [protein]-peptidylproline (omega=180) = [protein]-peptidylproline (omega=0). Its function is as follows. Involved in protein export. Acts as a chaperone by maintaining the newly synthesized protein in an open conformation. Functions as a peptidyl-prolyl cis-trans isomerase. In Streptococcus pneumoniae (strain Taiwan19F-14), this protein is Trigger factor.